Here is a 425-residue protein sequence, read N- to C-terminus: MFDTVCTLPLSADLFSQALHPKEPVVSVGLSSGHVQTFRLPTDEAASDDDETSNASSRNGRGHIDTMWRTRRHKGSCRCLTFGIDGETLYSAGTDGLIKAAKAETGVVENKIAIPTEKNGSIDAPTIIHALSPQTLLLATDSSALHLYDLRIPYSKVSAKPEQSHHPHDDYVSSLTPLPASDTSTSGFSKQWVTTGGTTLAVTDLRRGVLVRSEDQEEELISSTYIGGLAASGTSRGEKVLVGGSGGVLTLWEKGAWDDQDERIYVERGGGGGESLETMAVLPDELGKGKVVAVGLGNGRVKFVRIGANKVAAEVMHDETEGVIGLGFDVEGRMVTGGGQVVKVWHEAVVGADRYGAMPGEKRMYGDSDDSDEGDDSDDDSDDSDAGGRQDKPQNKRKKTKAKGKGGQQIMAFHDLDSMESSVVY.

WD repeat units lie at residues 9–48, 72–111, 117–158, 221–262, and 318–355; these read PLSADLFSQALHPKEPVVSVGLSSGHVQTFRLPTDEAASD, RHKGSCRCLTFGIDGETLYSAGTDGLIKAAKAETGVVENK, EKNG…SKVS, ISST…DQDE, and DETEGVIGLGFDVEGRMVTGGGQVVKVWHEAVVGADRY. Residues 40 to 63 are disordered; the sequence is LPTDEAASDDDETSNASSRNGRGH. The disordered stretch occupies residues 358 to 425; that stretch reads MPGEKRMYGD…LDSMESSVVY (68 aa). The segment covering 367 to 385 has biased composition (acidic residues); it reads DSDDSDEGDDSDDDSDDSD. A compositionally biased stretch (basic residues) spans 395 to 404; that stretch reads NKRKKTKAKG.

Belongs to the WD repeat WDR55 family.

It is found in the nucleus. The protein resides in the nucleolus. The sequence is that of WD repeat-containing protein jip5 (jip5) from Aspergillus niger (strain ATCC MYA-4892 / CBS 513.88 / FGSC A1513).